Reading from the N-terminus, the 393-residue chain is METFLFTSESVNEGHPDKLCDQISDAVLDACLAQDPESKVACETCTKTNMVMVFGEITTKAQVDYEKIVRDTCRAIGFVSDDVGLDADNCKVLVNIEQQSPDIAQGVHGHLTKRPEEIGAGDQGHMFGYATDETPELMPLSHVLATKLGARLTEVRKNGTCPWLRPDGKTQVTVEYYNDNGAMVPIRVHTVLISTQHDETVTNDEIAADLKEHVIKPVVPEKYLDEKTIFHLNPSGRFVIGGPHGDAGLTGRKIIIDTYGGWGAHGGGAFSGKDPTKVDRSGAYIVRQAAKSIVASGLARRCIVQVSYAIGVPEPLSVFVDTYGTGKIPDKEILKIVKENFDFRPGMIAINLDLKRGGNSRFLKTAAYGHFGREDPDFTWEVVKPLKFEKVEA.

Glu9 contacts Mg(2+). His15 serves as a coordination point for ATP. Position 43 (Glu43) interacts with K(+). 2 residues coordinate L-methionine: Glu56 and Gln99. Residues 167 to 169 (DGK), 235 to 238 (SGRF), Asp246, 252 to 253 (RK), Ala269, Lys273, and Lys277 each bind ATP. Asp246 provides a ligand contact to L-methionine. Lys277 contacts L-methionine.

Belongs to the AdoMet synthase family. Homotetramer. Mn(2+) is required as a cofactor. The cofactor is Mg(2+). It depends on Co(2+) as a cofactor. K(+) serves as cofactor. Requires NH4(+) as cofactor. In terms of tissue distribution, mostly expressed in roots, and, to a lower extent, in hypocotyls and cotyledons.

It localises to the cytoplasm. It carries out the reaction L-methionine + ATP + H2O = S-adenosyl-L-methionine + phosphate + diphosphate. Its pathway is amino-acid biosynthesis; S-adenosyl-L-methionine biosynthesis; S-adenosyl-L-methionine from L-methionine: step 1/1. Its activity is regulated as follows. Inhibited by products of SAMS reaction (SAM, Pi, PPi), substrate analogs (cycloleucine and ethionine), and alternative nucleotides (GTP, CTP and ADP). Strongly repressed by PPPi. Its function is as follows. Catalyzes the formation of S-adenosylmethionine from methionine and ATP. The reaction comprises two steps that are both catalyzed by the same enzyme: formation of S-adenosylmethionine (AdoMet) and triphosphate, and subsequent hydrolysis of the triphosphate. The sequence is that of S-adenosylmethionine synthase 2 (SAMS2) from Catharanthus roseus (Madagascar periwinkle).